The following is a 450-amino-acid chain: Chromosomal replication initiator protein DnaA (450 aa).

Residues 1–76 (MNLNDILKEL…KKILKQPVNI (76 aa)) form a domain I, interacts with DnaA modulators region. The domain II stretch occupies residues 76–107 (ISFTYEQEYQKQLEKTESINKDHSDIISKKNK). Positions 108-327 (KVNENTFENF…GSVSRLNFWS (220 aa)) are domain III, AAA+ region. Gly-151, Gly-153, Lys-154, and Thr-155 together coordinate ATP. Residues 328-450 (QQNPEEKVIT…DILKNKILTK (123 aa)) form a domain IV, binds dsDNA region.

This sequence belongs to the DnaA family. Oligomerizes as a right-handed, spiral filament on DNA at oriC.

The protein localises to the cytoplasm. Its subcellular location is the cell membrane. Its function is as follows. Plays an essential role in the initiation and regulation of chromosomal replication. ATP-DnaA binds to the origin of replication (oriC) to initiate formation of the DNA replication initiation complex once per cell cycle. Binds the DnaA box (a 9 base pair repeat at the origin) and separates the double-stranded (ds)DNA. Forms a right-handed helical filament on oriC DNA; dsDNA binds to the exterior of the filament while single-stranded (ss)DNA is stabiized in the filament's interior. The ATP-DnaA-oriC complex binds and stabilizes one strand of the AT-rich DNA unwinding element (DUE), permitting loading of DNA polymerase. After initiation quickly degrades to an ADP-DnaA complex that is not apt for DNA replication. Binds acidic phospholipids. This is Chromosomal replication initiator protein DnaA from Mycoplasma capricolum subsp. capricolum (strain California kid / ATCC 27343 / NCTC 10154).